Here is a 58-residue protein sequence, read N- to C-terminus: Large ribosomal subunit protein uL30 (58 aa).

This sequence belongs to the universal ribosomal protein uL30 family. As to quaternary structure, part of the 50S ribosomal subunit.

This Blochmanniella floridana protein is Large ribosomal subunit protein uL30.